The primary structure comprises 244 residues: ATP synthase subunit O, mitochondrial (244 aa).

A mitochondrion-targeting transit peptide spans 1-45 (MAMTGRARSMGFSILQKALSSAQRSNAHRSILCPTLSNSELLRNY).

The protein belongs to the ATPase delta chain family. F-type ATPases have 2 components, CF(1) - the catalytic core - and CF(0) - the membrane proton channel. CF(1) has five subunits: alpha(3), beta(3), gamma(1), delta(1), epsilon(1). CF(0) has three main subunits: a, b and c.

The protein resides in the mitochondrion. It is found in the mitochondrion inner membrane. In terms of biological role, mitochondrial membrane ATP synthase (F(1)F(0) ATP synthase or Complex V) produces ATP from ADP in the presence of a proton gradient across the membrane which is generated by electron transport complexes of the respiratory chain. F-type ATPases consist of two structural domains, F(1) - containing the extramembraneous catalytic core and F(0) - containing the membrane proton channel, linked together by a central stalk and a peripheral stalk. During catalysis, ATP synthesis in the catalytic domain of F(1) is coupled via a rotary mechanism of the central stalk subunits to proton translocation. Part of the complex F(0) domain and the peripheric stalk, which acts as a stator to hold the catalytic alpha(3)beta(3) subcomplex and subunit a/ATP6 static relative to the rotary elements. This Ipomoea batatas (Sweet potato) protein is ATP synthase subunit O, mitochondrial.